Consider the following 360-residue polypeptide: MKTSMQSKLDQLTTRLAELNDLLSRENVTADLDQYRKLTREHAEIGPVVEHYAQWRQARADELAAQELLADASMRDFAEDELRGARERMSRLAAELQTMLLPKDPNDERNIFVEIRAGTGGDESALFAGDLLRMYLRYAERQRWQVEMMSESPSDLGGYKEVIVRIAGYGAYSRLKFESGGHRVQRVPATETQGRIHTSACTVAVMPEADEIGEVEINPADLRIDTFRASGAGGQHINKTDSAVRVTHIPTGIVVECQDDRSQHKNKDRALKVLAARIKDKQYHEQHAKEAATRKSLIGSGDRSERIRTYNFPQGRMTDHRINLTLYKLEQIMDGDLDELIAALVSEHQAELLASLGDAE.

At glutamine 235 the chain carries N5-methylglutamine.

The protein belongs to the prokaryotic/mitochondrial release factor family. Post-translationally, methylated by PrmC. Methylation increases the termination efficiency of RF1.

It localises to the cytoplasm. Functionally, peptide chain release factor 1 directs the termination of translation in response to the peptide chain termination codons UAG and UAA. The chain is Peptide chain release factor 1 from Burkholderia thailandensis (strain ATCC 700388 / DSM 13276 / CCUG 48851 / CIP 106301 / E264).